Here is a 191-residue protein sequence, read N- to C-terminus: LOB domain-containing protein 19 (191 aa).

Residues 15–117 (GPCGACKFLR…AELAHVQARL (103 aa)) enclose the LOB domain.

The protein belongs to the LOB domain-containing protein family. As to expression, expressed in shoots, roots and floral tissues, but not in stems or leaves.

The polypeptide is LOB domain-containing protein 19 (LBD19) (Arabidopsis thaliana (Mouse-ear cress)).